A 378-amino-acid chain; its full sequence is Probable methyltransferase At1g29790 (378 aa).

Residues 1 to 6 are Cytoplasmic-facing; the sequence is MAGFTM. The helical; Signal-anchor for type II membrane protein transmembrane segment at 7-29 threads the bilayer; sequence SLNLLLLVAMVATNILSLYHLSS. Residues 30–378 lie on the Lumenal side of the membrane; it reads TTNFFQSTVK…TALLQKPVAR (349 aa). Residues 67–87 form a disordered region; sequence TTHQPDKSTSTSTSRAAVSSS. The segment covering 74–87 has biased composition (low complexity); the sequence is STSTSTSRAAVSSS. A glycan (N-linked (GlcNAc...) asparagine) is linked at Asn247.

It belongs to the methyltransferase superfamily.

It is found in the golgi apparatus membrane. This is Probable methyltransferase At1g29790 from Arabidopsis thaliana (Mouse-ear cress).